The following is an 815-amino-acid chain: Leucine--tRNA ligase (815 aa).

A 'HIGH' region motif is present at residues 41 to 51 (PYPSGTLHVGH). The 'KMSKS' region signature appears at 576–580 (KMSKS). Residue Lys579 coordinates ATP.

Belongs to the class-I aminoacyl-tRNA synthetase family.

The protein resides in the cytoplasm. It catalyses the reaction tRNA(Leu) + L-leucine + ATP = L-leucyl-tRNA(Leu) + AMP + diphosphate. The chain is Leucine--tRNA ligase from Pseudothermotoga lettingae (strain ATCC BAA-301 / DSM 14385 / NBRC 107922 / TMO) (Thermotoga lettingae).